The sequence spans 284 residues: Bifunctional protein FolD (284 aa).

Residues 165–167, Ser-190, and Ile-231 contribute to the NADP(+) site; that span reads GAS.

The protein belongs to the tetrahydrofolate dehydrogenase/cyclohydrolase family. In terms of assembly, homodimer.

The enzyme catalyses (6R)-5,10-methylene-5,6,7,8-tetrahydrofolate + NADP(+) = (6R)-5,10-methenyltetrahydrofolate + NADPH. It catalyses the reaction (6R)-5,10-methenyltetrahydrofolate + H2O = (6R)-10-formyltetrahydrofolate + H(+). It participates in one-carbon metabolism; tetrahydrofolate interconversion. Functionally, catalyzes the oxidation of 5,10-methylenetetrahydrofolate to 5,10-methenyltetrahydrofolate and then the hydrolysis of 5,10-methenyltetrahydrofolate to 10-formyltetrahydrofolate. This is Bifunctional protein FolD from Bordetella avium (strain 197N).